Here is a 445-residue protein sequence, read N- to C-terminus: Aminopeptidase C (445 aa).

Catalysis depends on residues cysteine 69, histidine 363, and asparagine 385.

It belongs to the peptidase C1 family. In terms of assembly, homohexamer.

It catalyses the reaction Inactivates bleomycin B2 (a cytotoxic glycometallopeptide) by hydrolysis of a carboxyamide bond of beta-aminoalanine, but also shows general aminopeptidase activity. The specificity varies somewhat with source, but amino acid arylamides of Met, Leu and Ala are preferred.. This chain is Aminopeptidase C (pepC), found in Streptococcus thermophilus.